The following is a 100-amino-acid chain: Urease subunit gamma (100 aa).

Belongs to the urease gamma subunit family. In terms of assembly, heterotrimer of UreA (gamma), UreB (beta) and UreC (alpha) subunits. Three heterotrimers associate to form the active enzyme.

It localises to the cytoplasm. The catalysed reaction is urea + 2 H2O + H(+) = hydrogencarbonate + 2 NH4(+). It functions in the pathway nitrogen metabolism; urea degradation; CO(2) and NH(3) from urea (urease route): step 1/1. The sequence is that of Urease subunit gamma from Yersinia rohdei.